The primary structure comprises 366 residues: S-adenosylmethionine:tRNA ribosyltransferase-isomerase (366 aa).

The protein belongs to the QueA family. In terms of assembly, monomer.

It is found in the cytoplasm. The enzyme catalyses 7-aminomethyl-7-carbaguanosine(34) in tRNA + S-adenosyl-L-methionine = epoxyqueuosine(34) in tRNA + adenine + L-methionine + 2 H(+). Its pathway is tRNA modification; tRNA-queuosine biosynthesis. Its function is as follows. Transfers and isomerizes the ribose moiety from AdoMet to the 7-aminomethyl group of 7-deazaguanine (preQ1-tRNA) to give epoxyqueuosine (oQ-tRNA). This Synechococcus sp. (strain CC9605) protein is S-adenosylmethionine:tRNA ribosyltransferase-isomerase.